We begin with the raw amino-acid sequence, 502 residues long: Glycerol kinase (502 aa).

Thr-14 is a binding site for ADP. Residues Thr-14, Thr-15, and Ser-16 each contribute to the ATP site. Thr-14 is a binding site for sn-glycerol 3-phosphate. Arg-18 provides a ligand contact to ADP. Residues Arg-84, Glu-85, and Tyr-136 each contribute to the sn-glycerol 3-phosphate site. The glycerol site is built by Arg-84, Glu-85, and Tyr-136. His-232 is subject to Phosphohistidine; by HPr. Asp-246 is a binding site for sn-glycerol 3-phosphate. 2 residues coordinate glycerol: Asp-246 and Gln-247. Residues Thr-268 and Gly-311 each coordinate ADP. Thr-268, Gly-311, Gln-315, and Gly-412 together coordinate ATP. Residues Gly-412 and Asn-416 each contribute to the ADP site.

This sequence belongs to the FGGY kinase family. As to quaternary structure, homotetramer and homodimer (in equilibrium). In terms of processing, the phosphoenolpyruvate-dependent sugar phosphotransferase system (PTS), including enzyme I, and histidine-containing protein (HPr) are required for the phosphorylation, which leads to the activation of the enzyme.

The enzyme catalyses glycerol + ATP = sn-glycerol 3-phosphate + ADP + H(+). Its pathway is polyol metabolism; glycerol degradation via glycerol kinase pathway; sn-glycerol 3-phosphate from glycerol: step 1/1. Its activity is regulated as follows. Activated by phosphorylation and inhibited by fructose 1,6-bisphosphate (FBP). Its function is as follows. Key enzyme in the regulation of glycerol uptake and metabolism. Catalyzes the phosphorylation of glycerol to yield sn-glycerol 3-phosphate. This Streptococcus pneumoniae (strain P1031) protein is Glycerol kinase.